A 428-amino-acid chain; its full sequence is Methyl-branched lipid omega-hydroxylase (428 aa).

Position 379 (Cys379) interacts with heme.

The protein belongs to the cytochrome P450 family. Requires heme as cofactor.

The catalysed reaction is a methyl-branched lipid + O2 + 2 reduced ferredoxin [iron-sulfur] cluster + 2 H(+) = an omega-hydroxy-methyl-branched lipid + H2O + 2 oxidized ferredoxin [iron-sulfur] cluster.. It carries out the reaction cholest-4-en-3-one + 6 reduced [2Fe-2S]-[ferredoxin] + 3 O2 + 5 H(+) = (25R)-3-oxocholest-4-en-26-oate + 6 oxidized [2Fe-2S]-[ferredoxin] + 4 H2O. It functions in the pathway lipid metabolism; branched-chain fatty acid metabolism. Its function is as follows. Primarily hydroxylates the omega-carbon of a number of methyl-branched lipids, including (2E,6E)-farnesol, phytanate, geranylgeraniol, 15-methylpalmitate and (2E,6E)-farnesyl diphosphate. Also catalyzes the sequential oxidation of the terminal methyl of cholest-4-en-3-one into (25R)-26-hydroxycholest-4-en-3-one (alcohol), (25R)-26-oxocholest-4-en-3-one (aldehyde), to finally yield the carboxylic acid (25R)-3-oxocholest-4-en-26-oate. Also able to sequentially oxidize cholesterol itself, not only cholest-4-en-3-one. This Mycobacterium bovis (strain ATCC BAA-935 / AF2122/97) protein is Methyl-branched lipid omega-hydroxylase (cyp124).